The chain runs to 189 residues: uncharacterized protein (189 aa).

Helical transmembrane passes span 49–69 (LLGI…LFVF), 78–98 (LFHK…LSLF), 102–122 (LTIV…FPMI), and 124–144 (VSIA…LFPA). A disordered region spans residues 165–189 (SSSAPDLNYPSLPTQSASPSQRFSA).

Belongs to the chlamydial CPn_0442/CT_006/TC_0274 family.

Its subcellular location is the cell membrane. This is an uncharacterized protein from Chlamydia trachomatis serovar D (strain ATCC VR-885 / DSM 19411 / UW-3/Cx).